The primary structure comprises 122 residues: Large ribosomal subunit protein uL14 (122 aa).

The protein belongs to the universal ribosomal protein uL14 family. As to quaternary structure, part of the 50S ribosomal subunit. Forms a cluster with proteins L3 and L19. In the 70S ribosome, L14 and L19 interact and together make contacts with the 16S rRNA in bridges B5 and B8.

Its function is as follows. Binds to 23S rRNA. Forms part of two intersubunit bridges in the 70S ribosome. This is Large ribosomal subunit protein uL14 from Streptococcus agalactiae serotype Ia (strain ATCC 27591 / A909 / CDC SS700).